Consider the following 250-residue polypeptide: MLLIAGLGNPGPQYAHNRHNIGFMAADEIFRRHRFSNWQKKFQAEIADGVIDGEKVLLVKPQTFMNLSGQSIGEAMRFYKMTPADLVVIYDELDLVPGKLRIKTGGGSGGHNGIKSIDAHMQSFPGGQNYRRMRLGIGHPGAKELVHNYVLGDFAKADNEWLDTLMGAVADNVAMLARREDNSFMNRIALAMGDGNQRPGGVKTDPAQLEKAPPKAQSHIRQARQNQKKPNIPESGPMAEMLKKLLGKKD.

A tRNA-binding site is contributed by Tyr14. His19 functions as the Proton acceptor in the catalytic mechanism. TRNA-binding residues include Phe64, Asn66, and Asn112. Positions 192-250 (MGDGNQRPGGVKTDPAQLEKAPPKAQSHIRQARQNQKKPNIPESGPMAEMLKKLLGKKD) are disordered. Positions 219-229 (HIRQARQNQKK) are enriched in polar residues. Positions 241 to 250 (MLKKLLGKKD) are enriched in basic and acidic residues.

This sequence belongs to the PTH family. As to quaternary structure, monomer.

The protein localises to the cytoplasm. It catalyses the reaction an N-acyl-L-alpha-aminoacyl-tRNA + H2O = an N-acyl-L-amino acid + a tRNA + H(+). Functionally, hydrolyzes ribosome-free peptidyl-tRNAs (with 1 or more amino acids incorporated), which drop off the ribosome during protein synthesis, or as a result of ribosome stalling. In terms of biological role, catalyzes the release of premature peptidyl moieties from peptidyl-tRNA molecules trapped in stalled 50S ribosomal subunits, and thus maintains levels of free tRNAs and 50S ribosomes. The polypeptide is Peptidyl-tRNA hydrolase (Brucella abortus (strain 2308)).